The sequence spans 632 residues: Pescadillo homolog (632 aa).

The segment at 306–341 (GDDADVDMDEGAKETDEEEDEDFVERPSKAQEVDDV) is disordered. A compositionally biased stretch (acidic residues) spans 307-328 (DDADVDMDEGAKETDEEEDEDF). Residues 361–459 (RQNLLFSPYT…KIISSEGYGP (99 aa)) enclose the BRCT domain. Disordered stretches follow at residues 485–535 (GEKA…QNPS), 565–585 (TKVHAKKVPASQKEKKGEEDL), and 601–632 (MQYSNREKAAEKEKLEKKRKAIEKRKAKEAKA). Over residues 492 to 516 (QEGEEEEEAAEQDEGESEDEEEDGK) the composition is skewed to acidic residues. The segment covering 521–531 (AEYPPALLAAA) has biased composition (low complexity). 2 stretches are compositionally biased toward basic and acidic residues: residues 576 to 585 (QKEKKGEEDL) and 605 to 616 (NREKAAEKEKLE). Residues 595–632 (AKLYEKMQYSNREKAAEKEKLEKKRKAIEKRKAKEAKA) adopt a coiled-coil conformation.

It belongs to the pescadillo family. In terms of assembly, component of the NOP7 complex, composed of ERB1, NOP7 and YTM1. The complex is held together by ERB1, which interacts with NOP7 via its N-terminal domain and with YTM1 via a high-affinity interaction between the seven-bladed beta-propeller domains of the 2 proteins. The NOP7 complex associates with the 66S pre-ribosome.

It is found in the nucleus. The protein resides in the nucleolus. The protein localises to the nucleoplasm. Its function is as follows. Component of the NOP7 complex, which is required for maturation of the 25S and 5.8S ribosomal RNAs and formation of the 60S ribosome. The polypeptide is Pescadillo homolog (Cryptococcus neoformans var. neoformans serotype D (strain B-3501A) (Filobasidiella neoformans)).